The primary structure comprises 274 residues: Large ribosomal subunit protein uL2 (274 aa).

The disordered stretch occupies residues 224–274; that stretch reads VAMNPVDHPHGGGEGRTSGGRHPVTPWGIPTKGYKTRRNKRSNKLIVQKRK. Residues 257 to 274 are compositionally biased toward basic residues; it reads YKTRRNKRSNKLIVQKRK.

Belongs to the universal ribosomal protein uL2 family. As to quaternary structure, part of the 50S ribosomal subunit. Forms a bridge to the 30S subunit in the 70S ribosome.

Functionally, one of the primary rRNA binding proteins. Required for association of the 30S and 50S subunits to form the 70S ribosome, for tRNA binding and peptide bond formation. It has been suggested to have peptidyltransferase activity; this is somewhat controversial. Makes several contacts with the 16S rRNA in the 70S ribosome. The polypeptide is Large ribosomal subunit protein uL2 (Francisella tularensis subsp. holarctica (strain FTNF002-00 / FTA)).